The chain runs to 370 residues: StAR-related lipid transfer protein 7, mitochondrial (370 aa).

The transit peptide at 1-58 (MLPRRLLAAWLAGTRGGGLLALLANQCRFVTGLRVRRAQQIAQLYGRLYSESSRRVLL) directs the protein to the mitochondrion. Residues 86 to 111 (DEERIQEEELQRSINEMKRLEEMSNM) adopt a coiled-coil conformation. Disordered stretches follow at residues 111 to 138 (MFQS…EGKE) and 343 to 370 (MSSE…IEYA). Positions 112-327 (FQSSGVQHHP…LHMATLKAKN (216 aa)) constitute an START domain.

In terms of processing, proteolytically cleaved by PARL. In terms of tissue distribution, expressed in nasal epithelial cells. Down-regulated in nasal epithelial cells in patients experiencing an asthma exacerbation as compared to stable asthmatics and healthy controls.

Its subcellular location is the mitochondrion. Its function is as follows. May play a protective role in mucosal tissues by preventing exaggerated allergic responses. This Homo sapiens (Human) protein is StAR-related lipid transfer protein 7, mitochondrial (STARD7).